The chain runs to 161 residues: Ragulator complex protein LAMTOR1 (161 aa).

The segment at Met-1–Leu-43 is disordered. A lipid anchor (N-myristoyl glycine) is attached at Gly-2. Residues Cys-3 and Cys-4 are each lipidated (S-palmitoyl cysteine). Lys-20 participates in a covalent cross-link: Glycyl lysine isopeptide (Lys-Gly) (interchain with G-Cter in ubiquitin). Residue Ser-27 is modified to Phosphoserine. A Glycyl lysine isopeptide (Lys-Gly) (interchain with G-Cter in ubiquitin) cross-link involves residue Lys-31. Residues Ser-42 and Ser-56 each carry the phosphoserine modification. Lys-60 participates in a covalent cross-link: Glycyl lysine isopeptide (Lys-Gly) (interchain with G-Cter in ubiquitin). Ser-98 is modified (phosphoserine). Residues Lys-103 and Lys-104 each participate in a glycyl lysine isopeptide (Lys-Gly) (interchain with G-Cter in ubiquitin) cross-link. Positions Ser-121–Pro-161 are interaction with LAMTOR2 and LAMTOR3. Ser-141 carries the phosphoserine modification.

The protein belongs to the LAMTOR1 family. As to quaternary structure, part of the Ragulator complex composed of LAMTOR1, LAMTOR2, LAMTOR3, LAMTOR4 and LAMTOR5. LAMTOR4 and LAMTOR5 form a heterodimer that interacts, through LAMTOR1, with a LAMTOR2, LAMTOR3 heterodimer. Interacts with LAMTOR2 and LAMTOR3; the interaction is direct. The Ragulator complex interacts with both the mTORC1 complex and heterodimers constituted of the Rag GTPases RagA/RRAGA, RagB/RRAGB, RagC/RRAGC and RagD/RRAGD; regulated by amino acid availability. The Ragulator complex interacts with SLC38A9; the probable amino acid sensor. Component of the lysosomal folliculin complex (LFC), composed of FLCN, FNIP1 (or FNIP2), RagA/RRAGA or RagB/RRAGB GDP-bound, RagC/RRAGC or RagD/RRAGD GTP-bound, and Ragulator. Associates with the lysosomal V-ATPase complex; interaction promotes the guanine nucleotide exchange factor (GEF) of the Ragulator complex. Interacts with MMP14. Interacts with CDKN1B; prevents the interaction of CDKN1B with RHOA leaving RHOA in a form accessible to activation by ARHGEF2. Interacts with PIP4P1. Post-translationally, N-terminal myristoylation and palmitoylation mediates its recruitment to lysosome membranes, thereby promoting localization of the Ragulator complex to lysosomes. N-myristoylation by NMT1 is required for palmitoylation at Cys-3 and Cys-4. May be palmitoylated by ZDHHC3. Ubiquitinated at Lys-60, Lys-103 and Lys-104 by UBE3A, promoting its degradation by the proteasome. Ubiquitination at Lys-20 impairs the association with the lysosomal V-ATPase complex. Deubiquitination at Lys-20 by USP32 promotes the association with the lysosomal V-ATPase complex and subsequent activation of the mTORC1 complex.

Its subcellular location is the lysosome membrane. It localises to the late endosome membrane. Functionally, key component of the Ragulator complex, a multiprotein complex involved in amino acid sensing and activation of mTORC1, a signaling complex promoting cell growth in response to growth factors, energy levels, and amino acids. Activated by amino acids through a mechanism involving the lysosomal V-ATPase, the Ragulator plays a dual role for the small GTPases Rag (RagA/RRAGA, RagB/RRAGB, RagC/RRAGC and/or RagD/RRAGD): it (1) acts as a guanine nucleotide exchange factor (GEF), activating the small GTPases Rag and (2) mediates recruitment of Rag GTPases to the lysosome membrane. Activated Ragulator and Rag GTPases function as a scaffold recruiting mTORC1 to lysosomes where it is in turn activated. LAMTOR1 is directly responsible for anchoring the Ragulator complex to the lysosomal membrane. LAMTOR1 wraps around the other subunits of the Ragulator complex to hold them in place and interacts with the Rag GTPases, thereby playing a key role in the recruitment of the mTORC1 complex to lysosomes. Also involved in the control of embryonic stem cells differentiation via non-canonical RagC/RRAGC and RagD/RRAGD activation: together with FLCN, it is necessary to recruit and activate RagC/RRAGC and RagD/RRAGD at the lysosomes, and to induce exit of embryonic stem cells from pluripotency via non-canonical, mTOR-independent TFE3 inactivation. Also required for late endosomes/lysosomes biogenesis it may regulate both the recycling of receptors through endosomes and the MAPK signaling pathway through recruitment of some of its components to late endosomes. May be involved in cholesterol homeostasis regulating LDL uptake and cholesterol release from late endosomes/lysosomes. May also play a role in RHOA activation. The sequence is that of Ragulator complex protein LAMTOR1 from Homo sapiens (Human).